A 60-amino-acid chain; its full sequence is Large ribosomal subunit protein uL30 (60 aa).

Belongs to the universal ribosomal protein uL30 family. Part of the 50S ribosomal subunit.

This is Large ribosomal subunit protein uL30 from Amoebophilus asiaticus (strain 5a2).